A 129-amino-acid polypeptide reads, in one-letter code: Large ribosomal subunit protein eL32 (129 aa).

It belongs to the eukaryotic ribosomal protein eL32 family.

The sequence is that of Large ribosomal subunit protein eL32 (rpl32e) from Archaeoglobus fulgidus (strain ATCC 49558 / DSM 4304 / JCM 9628 / NBRC 100126 / VC-16).